Consider the following 451-residue polypeptide: Exodeoxyribonuclease 7 large subunit (451 aa).

The protein belongs to the XseA family. Heterooligomer composed of large and small subunits.

The protein resides in the cytoplasm. It carries out the reaction Exonucleolytic cleavage in either 5'- to 3'- or 3'- to 5'-direction to yield nucleoside 5'-phosphates.. Bidirectionally degrades single-stranded DNA into large acid-insoluble oligonucleotides, which are then degraded further into small acid-soluble oligonucleotides. This chain is Exodeoxyribonuclease 7 large subunit, found in Neisseria meningitidis serogroup B (strain ATCC BAA-335 / MC58).